The primary structure comprises 712 residues: Methionine--tRNA ligase (712 aa).

The 'HIGH' region motif lies at 20-30 (PYANGKAHIGH). 4 residues coordinate Zn(2+): Cys-151, Cys-154, Cys-163, and Cys-167. The 'KMSKS' region signature appears at 334–338 (KFSKT). Residue Lys-337 participates in ATP binding. A disordered region spans residues 559–585 (ANAKKSAAKGGEKEPSKSEGMGPSEEA). A tRNA-binding domain is found at 610–712 (DFAKLDIRVG…KEIKPGSRIR (103 aa)).

Belongs to the class-I aminoacyl-tRNA synthetase family. MetG type 1 subfamily. Homodimer. Zn(2+) serves as cofactor.

Its subcellular location is the cytoplasm. It catalyses the reaction tRNA(Met) + L-methionine + ATP = L-methionyl-tRNA(Met) + AMP + diphosphate. Functionally, is required not only for elongation of protein synthesis but also for the initiation of all mRNA translation through initiator tRNA(fMet) aminoacylation. This Methanosarcina acetivorans (strain ATCC 35395 / DSM 2834 / JCM 12185 / C2A) protein is Methionine--tRNA ligase.